A 535-amino-acid chain; its full sequence is Isoleucine N-monooxygenase 1 (535 aa).

The Cytoplasmic portion of the chain corresponds to 1–8 (MGLMPDFL). A helical; Signal-anchor for type II membrane protein membrane pass occupies residues 9-29 (SLCHEFPWTFLLVVIFSFMIF). Over 30–535 (KVTKTHLVNK…AAELYRTNEI (506 aa)) the chain is Lumenal. N-linked (GlcNAc...) asparagine glycans are attached at residues Asn-38, Asn-232, and Asn-404. A heme-binding site is contributed by Cys-470.

The protein belongs to the cytochrome P450 family. The cofactor is heme. In terms of tissue distribution, exclusively expressed in aerial parts. Highest expression in the apical leaves. Also detected in the second leaf from the top and in the stem. Not expressed in older leaves or roots.

The protein resides in the microsome membrane. It carries out the reaction L-isoleucine + 2 reduced [NADPH--hemoprotein reductase] + 2 O2 = (1E,2S)-2-methylbutanal oxime + 2 oxidized [NADPH--hemoprotein reductase] + CO2 + 3 H2O + 2 H(+). It catalyses the reaction L-isoleucine + reduced [NADPH--hemoprotein reductase] + O2 = N-hydroxy-L-isoleucine + oxidized [NADPH--hemoprotein reductase] + H2O + 2 H(+). The enzyme catalyses N-hydroxy-L-isoleucine + reduced [NADPH--hemoprotein reductase] + O2 = N,N-dihydroxy-L-isoleucine + oxidized [NADPH--hemoprotein reductase] + H2O + H(+). The catalysed reaction is L-valine + 2 reduced [NADPH--hemoprotein reductase] + 2 O2 = (E)-2-methylpropanal oxime + 2 oxidized [NADPH--hemoprotein reductase] + CO2 + 3 H2O + 2 H(+). It carries out the reaction L-valine + reduced [NADPH--hemoprotein reductase] + O2 = N-hydroxy-L-valine + oxidized [NADPH--hemoprotein reductase] + H2O + 2 H(+). It catalyses the reaction N-hydroxy-L-valine + reduced [NADPH--hemoprotein reductase] + O2 = N,N-dihydroxy-L-valine + oxidized [NADPH--hemoprotein reductase] + H2O + H(+). It functions in the pathway secondary metabolite biosynthesis. Involved in the biosynthesis of the cyanogenic glucosides linamarin and lotaustralin and of the nitirle glucosides rhodiocyanoside A and D. Can use L-isoleucine &gt; L-valine as substrate, but not L-leucine, L-phenylalanine or L-tyrosine. Catalyzes multi-step reactions starting with two successive N-hydroxylations using L-isoleucine and, to a lower extent, L-valine as substrates leading to the formation of N,N-dihydroxy-L-valine and N,N-dihydroxy-L-isoleucine, respectively; following spontaneous reactions lead to the production of (E)-2-methylpropanal oxime and (1E,2S)-2-methylbutanal oxime, respectively. This is Isoleucine N-monooxygenase 1 from Lotus japonicus (Lotus corniculatus var. japonicus).